The following is a 264-amino-acid chain: Glutamate racemase (264 aa).

Substrate-binding positions include 11–12 and 43–44; these read DS and YG. Cys-74 acts as the Proton donor/acceptor in catalysis. 75–76 is a substrate binding site; sequence NT. Cys-193 functions as the Proton donor/acceptor in the catalytic mechanism. 194-195 serves as a coordination point for substrate; sequence TH.

This sequence belongs to the aspartate/glutamate racemases family.

The enzyme catalyses L-glutamate = D-glutamate. The protein operates within cell wall biogenesis; peptidoglycan biosynthesis. Its function is as follows. Provides the (R)-glutamate required for cell wall biosynthesis. In Bifidobacterium longum subsp. infantis (strain ATCC 15697 / DSM 20088 / JCM 1222 / NCTC 11817 / S12), this protein is Glutamate racemase.